We begin with the raw amino-acid sequence, 192 residues long: uncharacterized protein (192 aa).

This sequence belongs to the CAPAB/TerDEXZ family.

This is an uncharacterized protein from Bacillus subtilis (strain 168).